The chain runs to 553 residues: Probable malate:quinone oxidoreductase (553 aa).

Residues 524–553 (PPPKIDLGAPSQATGNAPARPAKASADMAL) form a disordered region.

It belongs to the MQO family. The cofactor is FAD.

The catalysed reaction is (S)-malate + a quinone = a quinol + oxaloacetate. Its pathway is carbohydrate metabolism; tricarboxylic acid cycle; oxaloacetate from (S)-malate (quinone route): step 1/1. In Burkholderia cenocepacia (strain HI2424), this protein is Probable malate:quinone oxidoreductase.